Consider the following 924-residue polypeptide: Mediator of RNA polymerase II transcription subunit 16 (924 aa).

It belongs to the Mediator complex subunit 16 family. In terms of assembly, component of the Mediator complex.

The protein localises to the nucleus. Functionally, component of the Mediator complex, a coactivator involved in the regulated transcription of nearly all RNA polymerase II-dependent genes. Mediator functions as a bridge to convey information from gene-specific regulatory proteins to the basal RNA polymerase II transcription machinery. Mediator is recruited to promoters by direct interactions with regulatory proteins and serves as a scaffold for the assembly of a functional preinitiation complex with RNA polymerase II and the general transcription factors. The chain is Mediator of RNA polymerase II transcription subunit 16 (SIN4) from Yarrowia lipolytica (strain CLIB 122 / E 150) (Yeast).